The sequence spans 373 residues: Protein SENSITIVE TO PROTON RHIZOTOXICITY 2 (373 aa).

C2H2-type zinc fingers lie at residues 217 to 239 (HYCQ…MRAH) and 327 to 362 (KHCG…VPAH).

In terms of tissue distribution, expressed at low levels in roots (e.g. root tips and lateral roots), leaves (e.g. at the edge of mature leaves, possibly in hydathodes, and in vascular bundles), flowers (e.g. floral filaments), stems, siliques and cotyledons.

The protein resides in the nucleus. Its function is as follows. Probable transcription factor. Together with STOP1, plays a critical role in tolerance to major stress factors in acid soils such as proton H(+) and aluminum ion Al(3+). Required for the expression of genes in response to acidic stress (e.g. ALMT1 and MATE), and Al-activated citrate exudation. The chain is Protein SENSITIVE TO PROTON RHIZOTOXICITY 2 from Arabidopsis thaliana (Mouse-ear cress).